The following is a 145-amino-acid chain: MSKKEVAIYTDGACSGNPGAGGWAAIILFQDYRKDIYGREENTTNNKMELTAVINGLKVLKFSCNINLYTDSLYVKHGITEWINKWKMNGWKTSNKKSVKNMELWKELDNVASQHEIDWKWVKAHSGDKYNEEADSLARKAIIDA.

Residues 2-143 form the RNase H type-1 domain; the sequence is SKKEVAIYTD…ADSLARKAII (142 aa). Residues Asp11, Glu49, Asp71, and Asp135 each contribute to the Mg(2+) site.

Belongs to the RNase H family. As to quaternary structure, monomer. Mg(2+) serves as cofactor.

It is found in the cytoplasm. The catalysed reaction is Endonucleolytic cleavage to 5'-phosphomonoester.. In terms of biological role, endonuclease that specifically degrades the RNA of RNA-DNA hybrids. This is Ribonuclease H from Wolbachia sp. subsp. Drosophila simulans (strain wRi).